Reading from the N-terminus, the 83-residue chain is Retinal cone rhodopsin-sensitive cGMP 3',5'-cyclic phosphodiesterase subunit gamma (83 aa).

Residues 1–19 (MSDNTTLAPPAASQAPATP) show a composition bias toward low complexity. The segment at 1-51 (MSDNTTLAPPAASQAPATPRKGPPKFKQRQTRQFKSKPPKKGVKGFGDDIP) is disordered. Basic residues predominate over residues 22–43 (GPPKFKQRQTRQFKSKPPKKGV).

It belongs to the rod/cone cGMP-PDE gamma subunit family. Tetramer composed of two catalytic chains (alpha and beta), and two inhibitory chains (gamma).

The enzyme catalyses 3',5'-cyclic GMP + H2O = GMP + H(+). In terms of biological role, participates in processes of transmission and amplification of the visual signal. cGMP-PDEs are the effector molecules in G-protein-mediated phototransduction in vertebrate rods and cones. This chain is Retinal cone rhodopsin-sensitive cGMP 3',5'-cyclic phosphodiesterase subunit gamma (PDE6H), found in Ictidomys tridecemlineatus (Thirteen-lined ground squirrel).